We begin with the raw amino-acid sequence, 371 residues long: Trans-enoyl reductase mycC (371 aa).

Position 51-54 (C51–K54) interacts with NADP(+). Substrate is bound at residue C140–L147. NADP(+) contacts are provided by residues S182 to S185, S205 to N208, Y223, and F270 to E271. G291–L295 is a substrate binding site. V361 to S362 is an NADP(+) binding site.

This sequence belongs to the zinc-containing alcohol dehydrogenase family. In terms of assembly, monomer.

The catalysed reaction is L-leucine + 8 malonyl-CoA + 4 S-adenosyl-L-methionine + ATP + 9 NADPH + 12 H(+) = (5S)-5-(2-methylpropyl)-3-[(2E,6R,8E,10E,12E)-6,8,10,12-tetramethyltetradeca-2,8,10,12-tetraenoyl]-2,5-dihydro-1H-pyrrol-2-one + AMP + 4 S-adenosyl-L-homocysteine + 8 CO2 + diphosphate + 9 NADP(+) + 8 CoA + 7 H2O. It functions in the pathway mycotoxin biosynthesis. Functionally, trans-enoyl reductase; part of the gene cluster that mediates the biosynthesis of myceliothermophins, mycotoxins that contain a trans-fused decalin ring system connected to a conjugated 3-pyrrolin-2-one moiety and that have potential anti-tumor properties. The polyketide synthase module (PKS) of the PKS-NRPS mycA is responsible for the synthesis of the octaketide backbone. The downstream nonribosomal peptide synthetase (NRPS) module then amidates the carboxyl end of the octaketide with a leucine. A reductase-like domain (R) at the C-terminus catalyzes the reductive release of the polyketide-amino acid intermediate. Because mycA lacks a designated enoylreductase (ER) domain, the required activity is provided the enoyl reductase mycC. Following mycA-catalyzed construction and release of aminoacyl polyketide aldehyde, Knoevenagel condensation yields the expected ketone. This C18 keto acyclic precursor is the substrate of the Diels-Alderase mycB, that catalyzes the Diels-Alder cycloaddition to produce myceliothermophin E. A yet unknown oxygenase involved in the production of myceliothermophin A, via substitution with a hydroxyl group at the C21, has still to be identified. The protein is Trans-enoyl reductase mycC of Thermothelomyces thermophilus (strain ATCC 42464 / BCRC 31852 / DSM 1799) (Sporotrichum thermophile).